We begin with the raw amino-acid sequence, 231 residues long: Large ribosomal subunit protein uL1 (231 aa).

It belongs to the universal ribosomal protein uL1 family. In terms of assembly, part of the 50S ribosomal subunit.

Binds directly to 23S rRNA. The L1 stalk is quite mobile in the ribosome, and is involved in E site tRNA release. Functionally, protein L1 is also a translational repressor protein, it controls the translation of the L11 operon by binding to its mRNA. The sequence is that of Large ribosomal subunit protein uL1 from Neisseria gonorrhoeae (strain ATCC 700825 / FA 1090).